A 214-amino-acid chain; its full sequence is Phosphatidylserine decarboxylase proenzyme (214 aa).

Residue Ser-182 is the Schiff-base intermediate with substrate; via pyruvic acid of the active site. Ser-182 bears the Pyruvic acid (Ser); by autocatalysis mark.

This sequence belongs to the phosphatidylserine decarboxylase family. PSD-A subfamily. Heterodimer of a large membrane-associated beta subunit and a small pyruvoyl-containing alpha subunit. The cofactor is pyruvate. Is synthesized initially as an inactive proenzyme. Formation of the active enzyme involves a self-maturation process in which the active site pyruvoyl group is generated from an internal serine residue via an autocatalytic post-translational modification. Two non-identical subunits are generated from the proenzyme in this reaction, and the pyruvate is formed at the N-terminus of the alpha chain, which is derived from the carboxyl end of the proenzyme. The post-translation cleavage follows an unusual pathway, termed non-hydrolytic serinolysis, in which the side chain hydroxyl group of the serine supplies its oxygen atom to form the C-terminus of the beta chain, while the remainder of the serine residue undergoes an oxidative deamination to produce ammonia and the pyruvoyl prosthetic group on the alpha chain.

It is found in the cell membrane. The enzyme catalyses a 1,2-diacyl-sn-glycero-3-phospho-L-serine + H(+) = a 1,2-diacyl-sn-glycero-3-phosphoethanolamine + CO2. The protein operates within phospholipid metabolism; phosphatidylethanolamine biosynthesis; phosphatidylethanolamine from CDP-diacylglycerol: step 2/2. Catalyzes the formation of phosphatidylethanolamine (PtdEtn) from phosphatidylserine (PtdSer). The protein is Phosphatidylserine decarboxylase proenzyme of Solidesulfovibrio magneticus (strain ATCC 700980 / DSM 13731 / RS-1) (Desulfovibrio magneticus).